Here is a 335-residue protein sequence, read N- to C-terminus: Cut9-interacting protein scn1 (335 aa).

Belongs to the metallo-dependent hydrolases superfamily.

Interacts with cut9. This Schizosaccharomyces pombe (strain 972 / ATCC 24843) (Fission yeast) protein is Cut9-interacting protein scn1 (scn1).